Here is a 523-residue protein sequence, read N- to C-terminus: MSFHKEDGVNSLCQKALHIVTELCFAGQVEWEKCSGIFPRDRGSQGGSSTDISVSLLAVVVSFCGLALLVVSLFVFWKLCWPCWKSKPVTSNITTLPQSISSAPTEVFETEEKKEIKENEKPAMKAIEPAIKISHTSPDIPAEVQTALKEHLIKHARVQRQITEPTSSSRHNSFRRHLPRQMQVSSVDFSMGTEPVLQRGETTTSIGRIKPELYKQKSVDSEGNQKEDVKICGKLNFTLQYDYENELLVVKIIKALDLPAKDFTGTSDPYVKMYLLPDRKKKFQTRVHRKTLNPLFDETFQFPVAYDQLSNRKLHFSVYDFDRFSRHDMIGEVILDNLFEVSDLSREATVWKDIHCATTESIDLGEIMFSLCYLPTAGRMTLTVIKCRNLKAMDITGSSDPYVKVSLMCEGRRLKKRKTTTKKNTLNPVYNEAIIFDIPPENVDQVSLSIAVMDYDRVGHNEVIGVCRTGLDAEGLGRDHWNEMLAYHRKPITHWHPLLELPGRATSFDSQGSCPSPKPPSTP.

Topologically, residues 1–55 (MSFHKEDGVNSLCQKALHIVTELCFAGQVEWEKCSGIFPRDRGSQGGSSTDISVS) are vesicular. The segment at 13–35 (CQKALHIVTELCFAGQVEWEKCS) is cysteine motif. Residues 56–76 (LLAVVVSFCGLALLVVSLFVF) traverse the membrane as a helical segment. The Cytoplasmic segment spans residues 77-523 (WKLCWPCWKS…CPSPKPPSTP (447 aa)). Phosphothreonine is present on Thr-136. C2 domains follow at residues 231-352 (ICGK…TVWK) and 363-496 (DLGE…THWH). Asp-262, Asp-268, Asp-320, Phe-321, Asp-322, Ser-325, Asp-328, Asp-394, Asp-400, Asp-454, and Asp-456 together coordinate Ca(2+).

The protein belongs to the synaptotagmin family. In terms of assembly, homodimer; disulfide-linked via the cysteine motif. Can also form heterodimers with SYT3, SYT6, SYT7 and SYT9. Ca(2+) is required as a cofactor.

It is found in the cytoplasmic vesicle. It localises to the secretory vesicle membrane. Ca(2+) sensor specifically required for the Ca(2+)-dependent exocytosis of secretory vesicles containing IGF1 in neurons of the olfactory bulb. Exocytosis of IGF1 is required for sensory perception of smell. Not involved in Ca(2+)-dependent synaptic vesicle exocytosis. Acts through Ca(2+) and phospholipid binding to the C2 domain: Ca(2+) induces binding of the C2-domains to phospholipid membranes and to assembled SNARE-complexes; both actions contribute to triggering exocytosis. In Pongo abelii (Sumatran orangutan), this protein is Synaptotagmin-10 (SYT10).